We begin with the raw amino-acid sequence, 890 residues long: Bacteriocin BCN5 (890 aa).

2 SH3b domains span residues 22-84 and 179-241; these read PPNA…TNAT and ENNA…TNAT. Positions 303–549 constitute a Peptidase M14 domain; sequence GYVKYEGAAA…RYLQKIINAV (247 aa). The Zn(2+) site is built by H358, E361, and H475. The active-site Proton donor/acceptor is E525. Residues 572-636 enclose the SH3b 3 domain; the sequence is EATGEVINVQ…VNSGYIIILK (65 aa). The hydrophobic stretch occupies residues 815–869; that stretch reads KALAAAVIVNGVETMFCAFLGGFIAQCIAPEFPIVAAVAGAIVSAIAAFAIGYFV.

Zn(2+) serves as cofactor.

In terms of biological role, may function as an ionophore. The sequence is that of Bacteriocin BCN5 (bcn) from Clostridium perfringens.